Reading from the N-terminus, the 200-residue chain is Imidazoleglycerol-phosphate dehydratase (200 aa).

This sequence belongs to the imidazoleglycerol-phosphate dehydratase family.

The protein resides in the cytoplasm. The catalysed reaction is D-erythro-1-(imidazol-4-yl)glycerol 3-phosphate = 3-(imidazol-4-yl)-2-oxopropyl phosphate + H2O. It functions in the pathway amino-acid biosynthesis; L-histidine biosynthesis; L-histidine from 5-phospho-alpha-D-ribose 1-diphosphate: step 6/9. The sequence is that of Imidazoleglycerol-phosphate dehydratase from Renibacterium salmoninarum (strain ATCC 33209 / DSM 20767 / JCM 11484 / NBRC 15589 / NCIMB 2235).